A 235-amino-acid polypeptide reads, in one-letter code: 2-C-methyl-D-erythritol 4-phosphate cytidylyltransferase (235 aa).

The protein belongs to the IspD/TarI cytidylyltransferase family. IspD subfamily.

The enzyme catalyses 2-C-methyl-D-erythritol 4-phosphate + CTP + H(+) = 4-CDP-2-C-methyl-D-erythritol + diphosphate. It functions in the pathway isoprenoid biosynthesis; isopentenyl diphosphate biosynthesis via DXP pathway; isopentenyl diphosphate from 1-deoxy-D-xylulose 5-phosphate: step 2/6. In terms of biological role, catalyzes the formation of 4-diphosphocytidyl-2-C-methyl-D-erythritol from CTP and 2-C-methyl-D-erythritol 4-phosphate (MEP). The protein is 2-C-methyl-D-erythritol 4-phosphate cytidylyltransferase of Pseudomonas putida (strain W619).